A 147-amino-acid polypeptide reads, in one-letter code: SsrA-binding protein (147 aa).

The protein belongs to the SmpB family.

It is found in the cytoplasm. Required for rescue of stalled ribosomes mediated by trans-translation. Binds to transfer-messenger RNA (tmRNA), required for stable association of tmRNA with ribosomes. tmRNA and SmpB together mimic tRNA shape, replacing the anticodon stem-loop with SmpB. tmRNA is encoded by the ssrA gene; the 2 termini fold to resemble tRNA(Ala) and it encodes a 'tag peptide', a short internal open reading frame. During trans-translation Ala-aminoacylated tmRNA acts like a tRNA, entering the A-site of stalled ribosomes, displacing the stalled mRNA. The ribosome then switches to translate the ORF on the tmRNA; the nascent peptide is terminated with the 'tag peptide' encoded by the tmRNA and targeted for degradation. The ribosome is freed to recommence translation, which seems to be the essential function of trans-translation. The polypeptide is SsrA-binding protein (Mycoplasmopsis fermentans (strain ATCC 19989 / NBRC 14854 / NCTC 10117 / PG18) (Mycoplasma fermentans)).